Here is a 241-residue protein sequence, read N- to C-terminus: Agamous-like MADS-box protein AGL8 homolog (241 aa).

The 55-residue stretch at 3–57 folds into the MADS-box domain; it reads RGRVQLKRIENKINRQVTFSKRRSGLLKKAHEISVLCDAEVALVIFSSKGKLFEY. One can recognise a K-box domain in the interval 88–178; the sequence is SENWVLEHAK…LKKIKEREKN (91 aa).

It is found in the nucleus. In terms of biological role, probable transcription factor. This Sinapis alba (White mustard) protein is Agamous-like MADS-box protein AGL8 homolog (AGL8).